The primary structure comprises 466 residues: Asparagine--tRNA ligase (466 aa).

Belongs to the class-II aminoacyl-tRNA synthetase family. In terms of assembly, homodimer.

It localises to the cytoplasm. It catalyses the reaction tRNA(Asn) + L-asparagine + ATP = L-asparaginyl-tRNA(Asn) + AMP + diphosphate + H(+). This Enterobacter sp. (strain 638) protein is Asparagine--tRNA ligase.